The primary structure comprises 80 residues: Small ribosomal subunit protein bS18 (80 aa).

Belongs to the bacterial ribosomal protein bS18 family. Part of the 30S ribosomal subunit. Forms a tight heterodimer with protein bS6.

Functionally, binds as a heterodimer with protein bS6 to the central domain of the 16S rRNA, where it helps stabilize the platform of the 30S subunit. This chain is Small ribosomal subunit protein bS18, found in Clostridium perfringens (strain ATCC 13124 / DSM 756 / JCM 1290 / NCIMB 6125 / NCTC 8237 / Type A).